Consider the following 392-residue polypeptide: Protein DJ-1 homolog A (392 aa).

PfpI endopeptidase domains lie at 6–174 (KTVL…EQLF) and 212–378 (PQIL…EKFY).

Belongs to the peptidase C56 family. As to quaternary structure, homodimer. Interacts with CSD1 and GPX2.

The protein resides in the cytoplasm. The protein localises to the cytosol. Its subcellular location is the nucleus. Its function is as follows. Involved in oxidative stress response. Confers protection against diverse stresses by binding both CSD1 and GPX2 and mediating the cytosolic activation of the Cu-Zn-dependent superoxide dismutase activity of CSD1. This is Protein DJ-1 homolog A (DJ1A) from Arabidopsis thaliana (Mouse-ear cress).